The chain runs to 502 residues: MSTANNKPTDESVSLNAFKQPKAFYLIFSIELWERFGFYGLQGIMAVYLVKQLGMSEADSITLFSSFSALVYGLVAVGGWLGDKVLGTKRVIMLGAVVLAIGYGLVAWSGHDAAVVYMGMATIAVGNGLFKANPSSLLSTCYNKDDPRLDGAFTMYYMSINIGSFFSMLATPWLAAKFGWSVAFALSFVGMLITVVNFLFCRSWVKNYGSKPDFEPVHIGKLLATIVGVVILATIATWLLHNQGVARAVLGVVALGIICIFAKEAFAMQGAARRKMIVAFILMLQAVVFFVLYSQMPTSLNFFAIRNVEHSILSIAFEPEQFQALNPFWIMIGSPILAAIYNKMGDRLPMPHKFAIGMVLCSGAFLVLPLGTKFATDAGIVSVNWLILSYALQSIGELMISGLGLAMVAQLVPQRLMGFIMGSWFLTTAGAALIAGKIANLMAVPENVTDPLVSLEVYGRVFMQIGIATAVIAVLMLLTAPKLNRMTLEDDKAAKATDTATA.

Over 1–35 (MSTANNKPTDESVSLNAFKQPKAFYLIFSIELWER) the chain is Cytoplasmic. A helical transmembrane segment spans residues 36–56 (FGFYGLQGIMAVYLVKQLGMS). Over 57–60 (EADS) the chain is Periplasmic. A helical transmembrane segment spans residues 61–81 (ITLFSSFSALVYGLVAVGGWL). Topologically, residues 82–90 (GDKVLGTKR) are cytoplasmic. The helical transmembrane segment at 91–111 (VIMLGAVVLAIGYGLVAWSGH) threads the bilayer. Residue D112 is a topological domain, periplasmic. Residues 113-133 (AAVVYMGMATIAVGNGLFKAN) form a helical membrane-spanning segment. The Cytoplasmic portion of the chain corresponds to 134–154 (PSSLLSTCYNKDDPRLDGAFT). Residues 155-175 (MYYMSINIGSFFSMLATPWLA) form a helical membrane-spanning segment. At 176–179 (AKFG) the chain is on the periplasmic side. The helical transmembrane segment at 180–200 (WSVAFALSFVGMLITVVNFLF) threads the bilayer. At 201–218 (CRSWVKNYGSKPDFEPVH) the chain is on the cytoplasmic side. A helical transmembrane segment spans residues 219–239 (IGKLLATIVGVVILATIATWL). At 240–247 (LHNQGVAR) the chain is on the periplasmic side. A helical membrane pass occupies residues 248–268 (AVLGVVALGIICIFAKEAFAM). The Cytoplasmic portion of the chain corresponds to 269–275 (QGAARRK). Residues 276-296 (MIVAFILMLQAVVFFVLYSQM) form a helical membrane-spanning segment. At 297 to 321 (PTSLNFFAIRNVEHSILSIAFEPEQ) the chain is on the periplasmic side. A helical transmembrane segment spans residues 322 to 342 (FQALNPFWIMIGSPILAAIYN). The Cytoplasmic segment spans residues 343 to 353 (KMGDRLPMPHK). A helical transmembrane segment spans residues 354 to 374 (FAIGMVLCSGAFLVLPLGTKF). Residues 375 to 384 (ATDAGIVSVN) are Periplasmic-facing. Residues 385-405 (WLILSYALQSIGELMISGLGL) form a helical membrane-spanning segment. Topologically, residues 406–415 (AMVAQLVPQR) are cytoplasmic. The helical transmembrane segment at 416-436 (LMGFIMGSWFLTTAGAALIAG) threads the bilayer. At 437–460 (KIANLMAVPENVTDPLVSLEVYGR) the chain is on the periplasmic side. The chain crosses the membrane as a helical span at residues 461-481 (VFMQIGIATAVIAVLMLLTAP). Residues 482–502 (KLNRMTLEDDKAAKATDTATA) lie on the Cytoplasmic side of the membrane.

The protein belongs to the major facilitator superfamily. Proton-dependent oligopeptide transporter (POT/PTR) (TC 2.A.17) family. DtpA subfamily.

It is found in the cell inner membrane. Functionally, proton-dependent permease that transports di- and tripeptides. This chain is Dipeptide and tripeptide permease A, found in Enterobacter sp. (strain 638).